A 678-amino-acid polypeptide reads, in one-letter code: MGRFGAVSYRQVKQSEADTIEIDSLKNGDIEKYNEENDKISRIPLAQLSINKINGIKSSVIEELSLKRPSYFMATKMIKSLLPYYWKKNPFKFRIILCVSIIFFSKLINLSVPLIFKNIINTLPEKVEWHLLILYGVLFLIQKSIWDIRDLLFQDVNDSATKQINLETFDHLHRLSLSYHLNKRTGSLIKIVERGTSSVVQLLSLLLFNIFPTLVELFTVSTFLLFSYGAEFAFINLTSCVVYIAFTLYVTERRTKHRRLANKKENEASDIKVDSLMNFETIKYFTAESYERKRYDFALMDFFQTNKKSKVSYFLLNFGQSSIIVIGTTLGLGLATWRASQNGFTLGDVIAINTFIAQMFSPLSWLGSSYRMILTAFTDMENLFELLDTQPEVSDSPNAKELNFNDTNNPSKTILPSIEFRNISFTYPNKNKEQQQSSPKILDNISFTVPAGKSIALVGSTGGGKSTIFRLLCRFYDVDQGEILINGENIKDVTQTSLRSIIGVVPQETVLFNDTVAYNIGFGNREANDDQLIDASRRAQILSFIESSPDGFRTVVGERGLRLSGGEKQRVSIARALLKDPPILILDEASSSLDTFTERKIQQAINEVSKGRTTLVIAHRLSTIIHCDEILVLKGGHIVERGSHSYLLDFNGDYAHLWNQQQLSASDLQYTPNQDTFE.

The next 6 helical transmembrane spans lie at 95-115, 128-148, 206-226, 230-250, 314-334, and 346-366; these read IILC…VPLI, EWHL…IWDI, LLFN…FLLF, AEFA…TLYV, FLLN…GLGL, and LGDV…LSWL. An ABC transmembrane type-1 domain is found at 95–375; sequence IILCVSIIFF…LGSSYRMILT (281 aa). The 243-residue stretch at 418-660 folds into the ABC transporter domain; that stretch reads IEFRNISFTY…NGDYAHLWNQ (243 aa). ATP-binding positions include Tyr427 and 459-470; that span reads GSTGGGKSTIFR.

It belongs to the ABC transporter superfamily. ABCB family. Heavy Metal importer (TC 3.A.1.210) subfamily.

The protein resides in the membrane. In Dictyostelium discoideum (Social amoeba), this protein is ABC transporter B family member 6 (abcB6).